A 327-amino-acid polypeptide reads, in one-letter code: Serpentine receptor class alpha-33 (327 aa).

6 helical membrane passes run 20-40 (FSVY…VLAI), 56-76 (LLIT…FLQN), 133-153 (FSHA…STVF), 186-206 (IIPY…LIIY), 227-247 (AVVS…LFCF), and 270-290 (IIGW…AVFL).

This sequence belongs to the nematode receptor-like protein sra family.

It is found in the membrane. This is Serpentine receptor class alpha-33 (sra-33) from Caenorhabditis elegans.